The sequence spans 224 residues: Ornithine decarboxylase antizyme (224 aa).

Belongs to the ODC antizyme family. Interacts with ODC and thereby sterically blocks ODC homodimerization.

Its function is as follows. Ornithine decarboxylase (ODC) antizyme protein that negatively regulates ODC activity and intracellular polyamine biosynthesis in response to increased intracellular polyamine levels. Binds to ODC monomers, inhibiting the assembly of the functional ODC homodimer, and targets the monomers for ubiquitin-independent proteolytic destruction by the 26S proteasome. This is Ornithine decarboxylase antizyme (spa1) from Schizosaccharomyces octosporus (Fission yeast).